The sequence spans 957 residues: Receptor-like protein 34 (957 aa).

Positions 1–31 are cleaved as a signal peptide; that stretch reads MKGSWVVSTSIIRITLSFTFLFICHFSDVLA. The Extracellular segment spans residues 32 to 910; that stretch reads APTRHLCRPE…EEEDEDLISW (879 aa). N-linked (GlcNAc...) asparagine glycosylation is found at N78, N101, N114, N143, N167, N191, and N215. 18 LRR repeats span residues 120 to 143, 144 to 167, 168 to 192, 194 to 216, 217 to 240, 241 to 264, 266 to 287, 288 to 312, 313 to 336, 338 to 360, 361 to 384, 386 to 409, 412 to 434, 435 to 459, 460 to 483, 487 to 510, 511 to 534, and 535 to 557; these read LHFL…SIEN, LSHL…SIGN, LSRL…IGNL, HLTF…IGNL, SHLT…IGGL, SNLT…IGNL, QLIV…SFGN, LNQL…LLNL, TGLS…ITSL, NLMA…LFII, PSLT…NISS, SNLQ…ISKL, LQEL…IFSH, LKSL…ILPY, FKTL…SVSS, SQSI…LRTQ, HELG…LWTL, and PNLF…TKPE. 2 N-linked (GlcNAc...) asparagine glycosylation sites follow: N242 and N263. N311 and N332 each carry an N-linked (GlcNAc...) asparagine glycan. An N-linked (GlcNAc...) asparagine glycan is attached at N381. N477 carries an N-linked (GlcNAc...) asparagine glycan. Residues N541, N544, N569, N593, N608, and N618 are each glycosylated (N-linked (GlcNAc...) asparagine). One copy of the LRR 19; degenerate repeat lies at 558-580; that stretch reads PSMAYLLGSNNNFTGKIPSFICE. LRR repeat units follow at residues 581–605, 606–630, 632–652, 653–675, 677–698, 699–722, 765–789, 790–813, 815–837, and 839–862; these read LRSL…MENL, KSNL…IFES, RSLD…LRFF, SNLE…WLSS, QKLQ…QALF, PKLR…YFVE, LTIY…IGLL, KELH…IGNL, ALES…IGNL, and LLSY…QFLT. An N-linked (GlcNAc...) asparagine glycan is attached at N712. N-linked (GlcNAc...) asparagine glycans are attached at residues N796, N812, N836, and N844. A helical membrane pass occupies residues 911 to 931; that stretch reads IAAAIGFGPGIAFGLMFGYIL. Residues 932-957 lie on the Cytoplasmic side of the membrane; it reads VSYKPEWFMNPFGRNNRRRKRHTTTH.

The protein belongs to the RLP family.

The protein resides in the cell membrane. The polypeptide is Receptor-like protein 34 (Arabidopsis thaliana (Mouse-ear cress)).